The sequence spans 364 residues: MKNILRKIIHIDMDCYFAAVEMRDFPELRGKPIAVGGRSDRRGVISTCNYEARAFGVRSAMASGYALKLCPDLILVPGRMSVYKEVSAQIRDIFARYTDLIEPLSLDEAYLDVTECKQCQGSATLIAQAIRQEIFEVTGLTASAGIAPVKFLAKVASDLNKPNGQYVITPDMISSFITTLPLTKIPGVGKVTGKKLEDIGLTTCGELQAYPKSELIERFGKFGKILIERAQGIDERAISPHRERKSVGVETTLAKDIYTLEQCHGVMPQLIQELGARMSRSAKGRSINKQVVKLKFNDFKQTTIEHRSDEMSVKLFYELLAQSLERQQGRGIRLLGVSVGLACQADSNTAKDNQVRESQLDLGF.

Residues 8 to 189 (IIHIDMDCYF…LPLTKIPGVG (182 aa)) enclose the UmuC domain. Mg(2+)-binding residues include Asp-12 and Asp-107. Glu-108 is an active-site residue.

Belongs to the DNA polymerase type-Y family. Monomer. Mg(2+) serves as cofactor.

The protein localises to the cytoplasm. The catalysed reaction is DNA(n) + a 2'-deoxyribonucleoside 5'-triphosphate = DNA(n+1) + diphosphate. Poorly processive, error-prone DNA polymerase involved in untargeted mutagenesis. Copies undamaged DNA at stalled replication forks, which arise in vivo from mismatched or misaligned primer ends. These misaligned primers can be extended by PolIV. Exhibits no 3'-5' exonuclease (proofreading) activity. May be involved in translesional synthesis, in conjunction with the beta clamp from PolIII. The chain is DNA polymerase IV from Shewanella woodyi (strain ATCC 51908 / MS32).